The following is a 355-amino-acid chain: Blue-sensitive opsin (355 aa).

The Extracellular portion of the chain corresponds to M1–K36. Residues N2 and N15 are each glycosylated (N-linked (GlcNAc...) asparagine). Residues Y37–V61 traverse the membrane as a helical segment. Residues T62–N73 are Cytoplasmic-facing. A helical membrane pass occupies residues Y74–A98. Topologically, residues W99–E113 are extracellular. C110 and C187 form a disulfide bridge. The chain crosses the membrane as a helical span at residues G114 to I133. Residues E134–H152 are Cytoplasmic-facing. The chain crosses the membrane as a helical span at residues A153–S176. Over R177 to S202 the chain is Extracellular. A glycan (N-linked (GlcNAc...) asparagine) is linked at N200. A helical transmembrane segment spans residues Y203–V230. Residues R231–R252 are Cytoplasmic-facing. A helical transmembrane segment spans residues M253 to F276. The Extracellular segment spans residues T277–S284. A helical transmembrane segment spans residues A285–M309. K296 carries the N6-(retinylidene)lysine modification. Over N310–A355 the chain is Cytoplasmic. Residues C322 and C323 are each lipidated (S-palmitoyl cysteine). The segment at D332–A355 is disordered. Residues S334–A355 show a composition bias toward low complexity.

This sequence belongs to the G-protein coupled receptor 1 family. Opsin subfamily. In terms of processing, phosphorylated on some or all of the serine and threonine residues present in the C-terminal region.

The protein resides in the membrane. In terms of biological role, visual pigments are the light-absorbing molecules that mediate vision. They consist of an apoprotein, opsin, covalently linked to cis-retinal. This opsin uses a vitamin A2 chromophore. In Anolis carolinensis (Green anole), this protein is Blue-sensitive opsin.